We begin with the raw amino-acid sequence, 320 residues long: Transcription factor MYB80 (320 aa).

2 HTH myb-type domains span residues 9–65 (KENV…RPDL) and 66–116 (KHGQ…KKKL). DNA-binding regions (H-T-H motif) lie at residues 37–61 (WRLIPKNAGLQRCGKSCRLRWTNYL) and 89–112 (WSLIAAQLPGRTDNDVKNYWNTKL). Positions 257 to 283 (TAAAEEEERRKLKGEVVDQEEIGSEGG) are disordered. Positions 263–272 (EERRKLKGEV) are enriched in basic and acidic residues.

Expressed in the tapetum and middle layer of developing anthers. Expressed in trichomes.

It is found in the nucleus. In terms of biological role, transcription factor that binds to the DNA sequence 5'-CCAACC-3'. Regulates directly PME5, UND and GLOX1. Essential for tapetum development in anthers and microsporogenesis. Regulates the timing of tapetal programmed cell death (PCD) which is critical for pollen development. May act through the activation of UND, encoding an A1 aspartic protease. Required for anther development by regulating tapetum development, callose dissolution and exine formation. Acts upstream of A6 and FAR2/MS2, two genes required for pollen exine formation. Negatively regulates trichome endoreduplication and trichome branching. In Arabidopsis thaliana (Mouse-ear cress), this protein is Transcription factor MYB80.